Reading from the N-terminus, the 1465-residue chain is Claspin (1465 aa).

The span at 1-12 (MSESLAETAAAA) shows a compositional bias: low complexity. 3 disordered regions span residues 1-490 (MSES…KAKV), 544-566 (ATALAGGSPMPSRQPRKSVGLRM), and 585-636 (ATEF…TEDM). Residues Ser-45, Ser-49, Ser-52, Ser-64, Ser-75, Ser-109, and Ser-114 each carry the phosphoserine modification. Residues 121–133 (QAEKKTQKEEGKQ) show a composition bias toward basic and acidic residues. Basic residues predominate over residues 154–163 (KSNKTKKAVK). Positions 205-216 (EYDHHQQHEKPA) are enriched in basic and acidic residues. A compositionally biased stretch (basic residues) spans 217–228 (KTQKSKKLAKKQ). 4 stretches are compositionally biased toward basic and acidic residues: residues 229 to 246 (KQQEDDKEDNGTEQEKKK), 254 to 263 (KKSDKSKIDS), 273 to 286 (EDLKMYQEDQEPQK), and 296 to 335 (TNKDSKEESGEDQEHQEQKKPLKKIKLDNIDTKEDKEQIV). The stretch at 260 to 281 (KIDSLMDNEEDAGEDLKMYQED) forms a coiled coil. Positions 336-346 (KPKKMAKKNKQ) are enriched in basic residues. A phosphoserine mark is found at Ser-350 and Ser-354. Positions 358-373 (QNEKVDQDHDLKKMSS) are enriched in basic and acidic residues. Residues 375-388 (NELEMGSDKEDQEM) show a composition bias toward acidic residues. Ser-381, Ser-404, Ser-406, Ser-432, Ser-434, Ser-444, Ser-456, Ser-458, and Ser-468 each carry phosphoserine. Positions 400-417 (QRMDSESEDEIPKTESEK) are enriched in basic and acidic residues. Residues 432–441 (SESEPEETAE) show a composition bias toward acidic residues. A compositionally biased stretch (acidic residues) spans 456–470 (SESEPELDNPEESAG). Residues 564–587 (LRMTREELEAYAKLMEDRAKEATE) adopt a coiled-coil conformation. The segment covering 594 to 606 (ESDEEDDSENEEP) has biased composition (acidic residues). At Thr-693 the chain carries Phosphothreonine. Positions 839–874 (LITKKRMEDLRKKQAEEQEKMAEDEEEGMDVDEEYE) form a coiled coil. Residues 845 to 859 (MEDLRKKQAEEQEKM) are compositionally biased toward basic and acidic residues. A disordered region spans residues 845-977 (MEDLRKKQAE…LDLLQTPKPS (133 aa)). Composition is skewed to acidic residues over residues 860–875 (AEDEEEGMDVDEEYEP), 913–942 (ADEDPEDNPVEDSEDEKNDSESEQECEANP), and 960–969 (DDNSDEDDLD). At Ser-963 the chain carries Phosphoserine. Position 973 is a phosphothreonine (Thr-973). Ser-990 is modified (phosphoserine). A disordered region spans residues 1058 to 1154 (CSGTFATQLP…AEPVEEIPET (97 aa)). A compositionally biased stretch (low complexity) spans 1067-1076 (PSQAPTQQPE). Phosphoserine is present on residues Ser-1093 and Ser-1094. The segment covering 1094–1103 (SDEEAQEDAL) has biased composition (acidic residues). The segment covering 1109–1123 (RNKKLTKKRPKKKAK) has biased composition (basic residues). The segment covering 1127–1154 (SDDEDSDDEVEEFDEESDAEPVEEIPET) has biased composition (acidic residues). A Phosphoserine modification is found at Ser-1287.

It belongs to the claspin family. In terms of processing, phosphorylated in response to DNA damage by IR and HU treatment. Phosphorylation does not require mei-41 or tefu. Detected in the ovary but not in the testis (at protein level).

The protein resides in the nucleus. In terms of biological role, required for checkpoint signaling in response to DNA replication stress; either resulting from normal embryogenesis or induced by the DNA synthesis inhibitor hydroxyurea (HU). It is not required for the G2 arrest resulting from DNA double strand breaks induced by ionizing irradiation (IR). Necessary for the timely phosphorylation of Cdk1 at the mid-blastula transition. May have a minor role in maintaining genomic stability in mitotic cells. This Drosophila melanogaster (Fruit fly) protein is Claspin.